A 494-amino-acid chain; its full sequence is 3-octaprenyl-4-hydroxybenzoate carboxy-lyase (494 aa).

Asn172 lines the Mn(2+) pocket. Residues 175 to 177, 189 to 191, and 194 to 195 each bind prenylated FMN; these read IYR, RWL, and RG. Glu238 serves as a coordination point for Mn(2+). The active-site Proton donor is the Asp287.

This sequence belongs to the UbiD family. In terms of assembly, homohexamer. Prenylated FMN serves as cofactor. Requires Mn(2+) as cofactor.

Its subcellular location is the cell membrane. The enzyme catalyses a 4-hydroxy-3-(all-trans-polyprenyl)benzoate + H(+) = a 2-(all-trans-polyprenyl)phenol + CO2. Its pathway is cofactor biosynthesis; ubiquinone biosynthesis. In terms of biological role, catalyzes the decarboxylation of 3-octaprenyl-4-hydroxy benzoate to 2-octaprenylphenol, an intermediate step in ubiquinone biosynthesis. This is 3-octaprenyl-4-hydroxybenzoate carboxy-lyase from Cronobacter sakazakii (strain ATCC BAA-894) (Enterobacter sakazakii).